The chain runs to 119 residues: Secreted RxLR effector protein RXLR-C04 (119 aa).

Residues 1–22 (MRLSYIFVVVATIITNCDIASA) form the signal peptide. The RxLR-dEER signature appears at 40–77 (RILRQTNDSDDLEPIRHAMLDMELLEKIAKDPKYAEEV). The N-linked (GlcNAc...) asparagine glycan is linked to asparagine 46.

Belongs to the RxLR effector family.

It localises to the secreted. The protein localises to the host cytoplasm. Its subcellular location is the host nucleus. Its function is as follows. Secreted effector that suppresses pattern-triggered immunity (PTI) in plant host. This is Secreted RxLR effector protein RXLR-C04 from Plasmopara halstedii (Downy mildew of sunflower).